We begin with the raw amino-acid sequence, 237 residues long: Concanavalin-Br (237 aa).

Residues Glu8 and Asp10 each coordinate Mn(2+). Asp10, Tyr12, Asn14, and Asp19 together coordinate Ca(2+). A carbohydrate is bound at residue Tyr12. Residues Asp19, His24, and Ser34 each coordinate Mn(2+). Leu99 to Tyr100 contributes to the a carbohydrate binding site. Asp208 contributes to the Ca(2+) binding site. Residue Arg228 participates in a carbohydrate binding.

The protein belongs to the leguminous lectin family. Homotetramer.

Glucose/D-mannose specific lectin. Has anti-inflammatory activity in rats. Induces histamine release in mast cells from hamster and rat. Induces lymphocyte proliferation and IFNG production. Shows toxicity against the aquatic snail B.glabrata at concentrations higher than 20 ug/ml. The chain is Concanavalin-Br from Canavalia brasiliensis (Brazilian jack bean).